Consider the following 204-residue polypeptide: CASP-like protein 3A1 (204 aa).

Over M1–V39 the chain is Cytoplasmic. Residues V40–I60 traverse the membrane as a helical segment. At S61–E88 the chain is on the extracellular side. N80 carries N-linked (GlcNAc...) asparagine glycosylation. A helical transmembrane segment spans residues Y89–A109. Topologically, residues H110–Y124 are cytoplasmic. Residues A125–A145 form a helical membrane-spanning segment. Residues A146–S179 lie on the Extracellular side of the membrane. N153 carries an N-linked (GlcNAc...) asparagine glycan. Residues I180–W200 form a helical membrane-spanning segment. Residues L201–M204 are Cytoplasmic-facing.

It belongs to the Casparian strip membrane proteins (CASP) family. In terms of assembly, homodimer and heterodimers.

Its subcellular location is the cell membrane. In Oryza sativa subsp. indica (Rice), this protein is CASP-like protein 3A1.